The sequence spans 122 residues: Large ribosomal subunit protein uL14 (122 aa).

Belongs to the universal ribosomal protein uL14 family. In terms of assembly, part of the 50S ribosomal subunit. Forms a cluster with proteins L3 and L19. In the 70S ribosome, L14 and L19 interact and together make contacts with the 16S rRNA in bridges B5 and B8.

Its function is as follows. Binds to 23S rRNA. Forms part of two intersubunit bridges in the 70S ribosome. The sequence is that of Large ribosomal subunit protein uL14 from Bdellovibrio bacteriovorus (strain ATCC 15356 / DSM 50701 / NCIMB 9529 / HD100).